The sequence spans 341 residues: Aspartate carbamoyltransferase catalytic subunit (341 aa).

Carbamoyl phosphate-binding residues include R89 and T90. K117 lines the L-aspartate pocket. 3 residues coordinate carbamoyl phosphate: R139, H169, and Q172. L-aspartate-binding residues include R202 and R257. G298 and P299 together coordinate carbamoyl phosphate.

Belongs to the aspartate/ornithine carbamoyltransferase superfamily. ATCase family. Heterododecamer (2C3:3R2) of six catalytic PyrB chains organized as two trimers (C3), and six regulatory PyrI chains organized as three dimers (R2).

The enzyme catalyses carbamoyl phosphate + L-aspartate = N-carbamoyl-L-aspartate + phosphate + H(+). It functions in the pathway pyrimidine metabolism; UMP biosynthesis via de novo pathway; (S)-dihydroorotate from bicarbonate: step 2/3. Functionally, catalyzes the condensation of carbamoyl phosphate and aspartate to form carbamoyl aspartate and inorganic phosphate, the committed step in the de novo pyrimidine nucleotide biosynthesis pathway. In Paraburkholderia phytofirmans (strain DSM 17436 / LMG 22146 / PsJN) (Burkholderia phytofirmans), this protein is Aspartate carbamoyltransferase catalytic subunit.